The primary structure comprises 470 residues: Proton-coupled amino acid transporter 3 (470 aa).

At 1 to 46 the chain is on the cytoplasmic side; the sequence is MSLLGRDYNSELNSLDNGPQSPSESSSSITSENVHPAGEAGLSMMQ. Polar residues predominate over residues 10–20; sequence SELNSLDNGPQ. A disordered region spans residues 10–33; sequence SELNSLDNGPQSPSESSSSITSEN. Positions 21-31 are enriched in low complexity; that stretch reads SPSESSSSITS. A helical transmembrane segment spans residues 47-67; the sequence is TLIHLLKCNIGTGLLGLPLAI. Residues 68 to 71 lie on the Extracellular side of the membrane; sequence KNAG. A helical transmembrane segment spans residues 72–92; the sequence is LLVGPVSLLAIGVLTVHCMVI. Residues 93–137 are Cytoplasmic-facing; the sequence is LLNCAQHLSQRLQKTFVNYGEATMYGLETCPNTWLRAHAVWGRYT. A helical transmembrane segment spans residues 138–158; that stretch reads VSFLLVITQLGFCSVYFMFMA. The Extracellular segment spans residues 159–185; that stretch reads DNLQQMVEKAHVTSNICQPREILTLTP. Residues 186 to 206 form a helical membrane-spanning segment; sequence ILDIRFYMLIILPFLILLVFI. Residues 207 to 210 are Cytoplasmic-facing; sequence QNLK. The chain crosses the membrane as a helical span at residues 211–231; that stretch reads VLSVFSTLANITTLGSMALIF. Residues 232–252 lie on the Extracellular side of the membrane; that stretch reads EYIMEGIPYPSNLPLMANWKT. Residues 253 to 273 form a helical membrane-spanning segment; that stretch reads FLLFFGTAIFTFEGVGMVLPL. Over 274-284 the chain is Cytoplasmic; sequence KNQMKHPQQFS. A helical membrane pass occupies residues 285–305; it reads FVLYLGMSIVIILYILLGTLG. Residues 306 to 337 are Extracellular-facing; that stretch reads YMKFGSDTQASITLNLPNCWLYQSVKLMYSIG. A helical membrane pass occupies residues 338-358; sequence IFFTYALQFHVPAEIIIPFAI. The Cytoplasmic segment spans residues 359 to 367; that stretch reads SQVSESWAL. A helical transmembrane segment spans residues 368–388; sequence FVDLSVRSALVCLTCVSAILI. Residues 389-392 are Extracellular-facing; sequence PRLD. A helical transmembrane segment spans residues 393–413; sequence LVISLVGSVSSSALALIIPAL. The Cytoplasmic segment spans residues 414 to 425; sequence LEIVIFYSEDMS. Residues 426 to 446 form a helical membrane-spanning segment; that stretch reads CVTIAKDIMISIVGLLGCIFG. The Extracellular portion of the chain corresponds to 447–470; the sequence is TYQALYELPQPISHSMANSTGVHA.

This sequence belongs to the amino acid/polyamine transporter 2 family. As to expression, specifically expressed in testis.

The protein localises to the membrane. The sequence is that of Proton-coupled amino acid transporter 3 (SLC36A3) from Homo sapiens (Human).